Consider the following 139-residue polypeptide: UPF0310 protein RSal33209_2865 (139 aa).

This sequence belongs to the UPF0310 family.

This Renibacterium salmoninarum (strain ATCC 33209 / DSM 20767 / JCM 11484 / NBRC 15589 / NCIMB 2235) protein is UPF0310 protein RSal33209_2865.